The chain runs to 266 residues: Phosphatidylglycerol--prolipoprotein diacylglyceryl transferase (266 aa).

7 helical membrane passes run 10-30 (VALAIGPLKIHWYGLMYLIGI), 56-76 (LVFWVACGVILGGRLGYVLFY), 92-112 (WKGGMSFHGGLLGVMLAVWWF), 120-140 (FFQLMDFIAPLVPIGLGAGRI), 171-191 (PSQLYQFALEGVALFVILWLF), 199-219 (ASVSGLFVLCYGIFRFVVEFV), and 233-253 (WLTMGQVLCVPMVLAGIALMV). Arginine 139 contributes to the a 1,2-diacyl-sn-glycero-3-phospho-(1'-sn-glycerol) binding site.

This sequence belongs to the Lgt family.

It localises to the cell inner membrane. It carries out the reaction L-cysteinyl-[prolipoprotein] + a 1,2-diacyl-sn-glycero-3-phospho-(1'-sn-glycerol) = an S-1,2-diacyl-sn-glyceryl-L-cysteinyl-[prolipoprotein] + sn-glycerol 1-phosphate + H(+). It functions in the pathway protein modification; lipoprotein biosynthesis (diacylglyceryl transfer). Catalyzes the transfer of the diacylglyceryl group from phosphatidylglycerol to the sulfhydryl group of the N-terminal cysteine of a prolipoprotein, the first step in the formation of mature lipoproteins. This Pseudomonas aeruginosa (strain LESB58) protein is Phosphatidylglycerol--prolipoprotein diacylglyceryl transferase.